A 304-amino-acid polypeptide reads, in one-letter code: Pyridoxal 5'-phosphate synthase subunit PdxS (304 aa).

Aspartate 34 is a D-ribose 5-phosphate binding site. The active-site Schiff-base intermediate with D-ribose 5-phosphate is the lysine 91. A D-ribose 5-phosphate-binding site is contributed by glycine 163. Arginine 175 provides a ligand contact to D-glyceraldehyde 3-phosphate. D-ribose 5-phosphate is bound by residues glycine 224 and 245 to 246; that span reads GS.

Belongs to the PdxS/SNZ family. In terms of assembly, in the presence of PdxT, forms a dodecamer of heterodimers.

The catalysed reaction is aldehydo-D-ribose 5-phosphate + D-glyceraldehyde 3-phosphate + L-glutamine = pyridoxal 5'-phosphate + L-glutamate + phosphate + 3 H2O + H(+). It participates in cofactor biosynthesis; pyridoxal 5'-phosphate biosynthesis. Functionally, catalyzes the formation of pyridoxal 5'-phosphate from ribose 5-phosphate (RBP), glyceraldehyde 3-phosphate (G3P) and ammonia. The ammonia is provided by the PdxT subunit. Can also use ribulose 5-phosphate and dihydroxyacetone phosphate as substrates, resulting from enzyme-catalyzed isomerization of RBP and G3P, respectively. This Streptomyces avermitilis (strain ATCC 31267 / DSM 46492 / JCM 5070 / NBRC 14893 / NCIMB 12804 / NRRL 8165 / MA-4680) protein is Pyridoxal 5'-phosphate synthase subunit PdxS.